A 311-amino-acid polypeptide reads, in one-letter code: 3'(2'),5'-bisphosphate nucleotidase 1 (311 aa).

Asp-49 acts as the Proton acceptor in catalysis. Residues Glu-72, Asp-116, Leu-118, and Asp-119 each contribute to the Mg(2+) site. The active-site Proton acceptor is the Thr-121. AMP-binding residues include Thr-202, His-205, Gly-227, and Lys-231. Residue Asp-254 participates in Mg(2+) binding.

This sequence belongs to the inositol monophosphatase superfamily. Mg(2+) is required as a cofactor.

The enzyme catalyses adenosine 3',5'-bisphosphate + H2O = AMP + phosphate. It catalyses the reaction adenosine 2',5'-bisphosphate + H2O = AMP + phosphate. It carries out the reaction 3'-phosphoadenylyl sulfate + H2O = adenosine 5'-phosphosulfate + phosphate. The catalysed reaction is 1D-myo-inositol 1,4-bisphosphate + H2O = 1D-myo-inositol 4-phosphate + phosphate. The enzyme catalyses 1D-myo-inositol 1,3,4-trisphosphate + H2O = 1D-myo-inositol 3,4-bisphosphate + phosphate. Inhibited by Li(+) and Ca(2+), but not by Na(+). Its function is as follows. Phosphatase that converts 3'(2')-phosphoadenosine 5'-phosphate (PAP) to AMP and adenosine 3'-phosphate 5'-phosphosulfate (PAPS) to adenosine 5'-phosphosulfate (APS). Is also able to hydrolyze inositol 1,4-bisphosphate (Ins(1,4)P2) and inositol 1,3,4-trisphosphate (Ins(1,3,4)P3), but is not active on AMP, 3'-AMP, fructose-1,6-bisphosphate, Ins(1)P, Ins(2)P and Ins(1,4,5)P3. Probably prevents the toxic accumulation of PAP, a compound which inhibits a variety of proteins, including PAPS-utilizing enzymes such as sulfotransferases, and RNA processing enzymes. Could also play a role in inositol recycling and phosphoinositide metabolism. This is 3'(2'),5'-bisphosphate nucleotidase 1 (bpnt1) from Dictyostelium discoideum (Social amoeba).